The sequence spans 178 residues: UPF0302 protein Bcer98_1244 (178 aa).

This sequence belongs to the UPF0302 family.

The protein is UPF0302 protein Bcer98_1244 of Bacillus cytotoxicus (strain DSM 22905 / CIP 110041 / 391-98 / NVH 391-98).